A 218-amino-acid chain; its full sequence is Small ribosomal subunit protein uS3 (218 aa).

In terms of domain architecture, KH type-2 spans 38-106 (IRKYIESKLA…RVHINIVEIK (69 aa)).

It belongs to the universal ribosomal protein uS3 family. In terms of assembly, part of the 30S ribosomal subunit. Forms a tight complex with proteins S10 and S14.

Functionally, binds the lower part of the 30S subunit head. Binds mRNA in the 70S ribosome, positioning it for translation. This chain is Small ribosomal subunit protein uS3, found in Ligilactobacillus salivarius (strain UCC118) (Lactobacillus salivarius).